The chain runs to 804 residues: MAPPLFLLSLQLLVLLSSPSAQAQNISLGTSLTTQGPNNAWLSPSGDFAFGFRPIDGNSSFYLLAIWFNKISDKTATWYAKTSEQEPQPIQVPSGSILQFTSTGVLSLRDPTNREVWNPGATGAPYASMLDTGNFVIAAAGGSTISWETFKNPTDTILVTQALSPGMKLRSRLLTTDYSNGRFLLNMETQRAALYTMAVPSGNLYDPYWSTPIDENVTNQVTNLVFNTTGRIYVSMKNGTQFNMTSGVIRSMEDYYHRATLDPDGVFRQYVYPKKPSSMSQAWTAVSIQPENICNAQTKVGSGTCGFNSYCMFDGSNNQTSCVCPEQYSFFDEVRKYRGCRPDFELQSCDLDEAASMAQYEFNLVNNVDWPQADYEWYTPIDMDECRRLCLIDCFCAVAVFHENTCWKKKLPLSNGIMGSGVQRTVLIKVPKSNSSQPELRKSRKWKSDKKLWILGSSLLLGGSVIANFALSSVLLFGTYCTITRKDVQPLQPSRDPGLPLKAFSYAELEKATDGFKEVLGTGASGIVYKGQLQDELGTYIAVKKIDKIQHETEKEFAVEVQTIGRTYHKNLVRMLGFCNEGTERLLVYEFMVNGSLNRFLFSGVRPLWSLRVQLALGVARGLLYLHEECSTQIIHCDIKPQNILLDDNFIAKISDFGLAKLLRTNQTQTYTGIRGTRGYVAPEWFKNVGITAKVDVYSFGVILLELICCRQNVEMEAAEEEQSILTYWANDCYRCGRVDLLVDGDDEAKLNIKKVERFVAVALWCLQEEPTMRPSILKVTQMLDGADAIPTPPDSSSVVNSFP.

Residues 1-23 form the signal peptide; it reads MAPPLFLLSLQLLVLLSSPSAQA. The region spanning 24 to 150 is the Bulb-type lectin domain; sequence QNISLGTSLT…GGSTISWETF (127 aa). The Extracellular portion of the chain corresponds to 24-458; sequence QNISLGTSLT…DKKLWILGSS (435 aa). Residues asparagine 25, asparagine 58, asparagine 216, asparagine 227, asparagine 238, and asparagine 243 are each glycosylated (N-linked (GlcNAc...) asparagine). The region spanning 290–341 is the EGF-like; atypical domain; that stretch reads PENICNAQTKVGSGTCGFNSYCMFDGSNNQTSCVCPEQYSFFDEVRKYRGCR. Disulfide bonds link cysteine 294–cysteine 311, cysteine 305–cysteine 322, cysteine 324–cysteine 340, cysteine 386–cysteine 406, and cysteine 390–cysteine 396. An N-linked (GlcNAc...) asparagine glycan is attached at asparagine 318. Residues 349 to 426 enclose the PAN domain; the sequence is CDLDEAASMA…IMGSGVQRTV (78 aa). N-linked (GlcNAc...) asparagine glycosylation is present at asparagine 434. A helical membrane pass occupies residues 459 to 479; it reads LLLGGSVIANFALSSVLLFGT. Topologically, residues 480–804 are cytoplasmic; sequence YCTITRKDVQ…DSSSVVNSFP (325 aa). A Protein kinase domain is found at 514-790; it reads DGFKEVLGTG…TQMLDGADAI (277 aa). ATP is bound by residues 520–528 and lysine 544; that span reads LGTGASGIV. Aspartate 638 (proton acceptor) is an active-site residue.

Belongs to the protein kinase superfamily. Ser/Thr protein kinase family.

The protein resides in the membrane. It catalyses the reaction L-seryl-[protein] + ATP = O-phospho-L-seryl-[protein] + ADP + H(+). The enzyme catalyses L-threonyl-[protein] + ATP = O-phospho-L-threonyl-[protein] + ADP + H(+). In terms of biological role, does not seem to be involved in resistance against the herbivorous insect brown planthopper (N.lugens, BPH). The protein is G-type lectin S-receptor-like serine/threonine-protein kinase LECRK4 of Oryza sativa subsp. indica (Rice).